Reading from the N-terminus, the 189-residue chain is Recombination protein RecR (189 aa).

A C4-type zinc finger spans residues 48–63 (CQTCFHLSAEPTCEIC). The 95-residue stretch at 71–165 (GMLCVVADSR…EVSRIAYGLP (95 aa)) folds into the Toprim domain.

Belongs to the RecR family.

Functionally, may play a role in DNA repair. It seems to be involved in an RecBC-independent recombinational process of DNA repair. It may act with RecF and RecO. The sequence is that of Recombination protein RecR from Synechococcus sp. (strain CC9311).